The chain runs to 121 residues: Large ribosomal subunit protein bL20 (121 aa).

This sequence belongs to the bacterial ribosomal protein bL20 family.

Binds directly to 23S ribosomal RNA and is necessary for the in vitro assembly process of the 50S ribosomal subunit. It is not involved in the protein synthesizing functions of that subunit. In Dinoroseobacter shibae (strain DSM 16493 / NCIMB 14021 / DFL 12), this protein is Large ribosomal subunit protein bL20.